We begin with the raw amino-acid sequence, 341 residues long: O(6)-methylguanine-induced apoptosis 2 (341 aa).

Residues 1 to 10 (MSQKFANTGS) show a composition bias toward polar residues. Residues 1–23 (MSQKFANTGSFIEREDLGKPNKG) are disordered. Over residues 12 to 23 (IEREDLGKPNKG) the composition is skewed to basic and acidic residues. STPGR repeat units follow at residues 73 to 80 (PGPGFYNV), 115 to 123 (PAANAYTIR), 154 to 160 (PAPNHYN), 194 to 213 (GPAP…SPKV), 232 to 254 (GPGP…HLPK), 273 to 284 (LPGPGQYEIVNY), and 313 to 323 (LPGPASYKPEI). Tyr78 carries the post-translational modification Phosphotyrosine.

Belongs to the STPG1 family.

Its subcellular location is the cytoplasm. It is found in the nucleus. Functionally, may positively contribute to the induction of apoptosis triggered by O(6)-methylguanine. This Rattus norvegicus (Rat) protein is O(6)-methylguanine-induced apoptosis 2 (Stpg1).